The chain runs to 161 residues: Large ribosomal subunit protein mL50 (161 aa).

Positions 27 to 51 (WGGHSKKEEKEVEENSIIPQEKKEP) are disordered.

It belongs to the mitochondrion-specific ribosomal protein mL50 family. As to quaternary structure, component of the mitochondrial ribosome large subunit (39S) which comprises a 16S rRNA and about 50 distinct proteins.

The protein localises to the mitochondrion. This is Large ribosomal subunit protein mL50 (MRPL50) from Gallus gallus (Chicken).